The following is a 233-amino-acid chain: Gamma-glutamyl-hercynylcysteine sulfoxide hydrolase (233 aa).

Cys2 (nucleophile) is an active-site residue. The region spanning 2–233 is the Glutamine amidotransferase type-2 domain; that stretch reads CRHLGWLGAQ…TALDRAKGPR (232 aa).

The enzyme catalyses gamma-L-glutamyl-hercynylcysteine S-oxide + H2O = S-(hercyn-2-yl)-L-cysteine S-oxide + L-glutamate. Its pathway is amino-acid biosynthesis; ergothioneine biosynthesis. Catalyzes the hydrolysis of the gamma-glutamyl amide bond of hercynyl-gamma-L-glutamyl-L-cysteine sulfoxide to produce hercynylcysteine sulfoxide, a step in the biosynthesis pathway of ergothioneine. Ergothioneine is an antioxidant that protects mycobacteria from oxidative stress. The protein is Gamma-glutamyl-hercynylcysteine sulfoxide hydrolase (egtC) of Mycobacterium tuberculosis (strain ATCC 25618 / H37Rv).